A 375-amino-acid chain; its full sequence is Erythronate-4-phosphate dehydrogenase (375 aa).

2 residues coordinate substrate: Ser45 and Thr66. NAD(+) is bound by residues Asp146, Thr175, Ala206–Arg208, and Asp232. Residue Arg208 is part of the active site. Glu237 is an active-site residue. His254 serves as the catalytic Proton donor. Gly257 provides a ligand contact to NAD(+). A substrate-binding site is contributed by Tyr258.

Belongs to the D-isomer specific 2-hydroxyacid dehydrogenase family. PdxB subfamily. In terms of assembly, homodimer.

The protein localises to the cytoplasm. The catalysed reaction is 4-phospho-D-erythronate + NAD(+) = (R)-3-hydroxy-2-oxo-4-phosphooxybutanoate + NADH + H(+). The protein operates within cofactor biosynthesis; pyridoxine 5'-phosphate biosynthesis; pyridoxine 5'-phosphate from D-erythrose 4-phosphate: step 2/5. Functionally, catalyzes the oxidation of erythronate-4-phosphate to 3-hydroxy-2-oxo-4-phosphonooxybutanoate. The chain is Erythronate-4-phosphate dehydrogenase from Proteus mirabilis (strain HI4320).